The chain runs to 360 residues: MGQRTPLFDLHLALGAKMVDFGGWDMPLHYGSQVEEHHQVRRDCGVFDVSHMNVIDVLGREAKAWLRRLLANDVDKLKTPGRALYSAMLDEQAGVIDDMIVYLTADGYRLVVNAATGAKDLAWMQSQLGDFDVQLLARSEMAMLAIQGPQARNRIAQLVSSARAELIRQLKPFEGLDDGDWFIARTGYTGEDGLEIMLPADEAQRFFNELVGAGISPIGLGARDTLRLEAGMNLYGQDIGEHVSPLASNMAWSIAWEPAERDFIGRQALESERAEGTAFKLVGLVLEERGVLRAHQVVRVAEIGEGEITSGSFSPTLSKSIALARVPMATADRAEVEIRGKWYPVRVVQPAFVRHGKTLI.

This sequence belongs to the GcvT family. The glycine cleavage system is composed of four proteins: P, T, L and H.

It catalyses the reaction N(6)-[(R)-S(8)-aminomethyldihydrolipoyl]-L-lysyl-[protein] + (6S)-5,6,7,8-tetrahydrofolate = N(6)-[(R)-dihydrolipoyl]-L-lysyl-[protein] + (6R)-5,10-methylene-5,6,7,8-tetrahydrofolate + NH4(+). In terms of biological role, the glycine cleavage system catalyzes the degradation of glycine. The sequence is that of Aminomethyltransferase from Pseudomonas syringae pv. tomato (strain ATCC BAA-871 / DC3000).